We begin with the raw amino-acid sequence, 428 residues long: CRS2-associated factor 1, mitochondrial (428 aa).

The transit peptide at 1-21 (MLLLAGLLRRARPPRRPSVRR) directs the protein to the mitochondrion. 2 disordered regions span residues 33–100 (PPAS…REPK) and 129–152 (HADDPAPAAERELEEARRRERERV). CRM domains follow at residues 155–253 (EPLT…KRPV) and 275–371 (EGLT…IQDN). Positions 378–428 (SVLEEESAGAESENGDQEQASSDWASDECSQLSSSDEMPDDKSAISEADSD) are disordered. The segment covering 380–393 (LEEESAGAESENGD) has biased composition (acidic residues). Residues 394–413 (QEQASSDWASDECSQLSSSD) show a composition bias toward polar residues.

In terms of assembly, part of large ribonucleo-protein complexes that include group IIB introns.

The protein localises to the mitochondrion. In terms of biological role, may be involved in the splicing of group IIB introns in mitochondria. This is CRS2-associated factor 1, mitochondrial from Oryza sativa subsp. japonica (Rice).